Reading from the N-terminus, the 429-residue chain is Bifunctional protein GlmU (429 aa).

Positions 1 to 223 are pyrophosphorylase; that stretch reads MKTSILILAA…EDEFMGINDK (223 aa). Residues 8–11, Lys-22, and 81–82 each bind UDP-N-acetyl-alpha-D-glucosamine; these read LAAG and GT. Residue Asp-102 coordinates Mg(2+). Positions 135, 149, 164, and 221 each coordinate UDP-N-acetyl-alpha-D-glucosamine. Residue Asn-221 participates in Mg(2+) binding. The linker stretch occupies residues 224-244; the sequence is FELSIAENFMQEKIKKYWMQQ. Positions 245-429 are N-acetyltransferase; sequence GVIFHLPQST…KDYYYKKFQK (185 aa). UDP-N-acetyl-alpha-D-glucosamine-binding residues include Arg-308 and Lys-325. The Proton acceptor role is filled by His-336. UDP-N-acetyl-alpha-D-glucosamine-binding residues include Tyr-339 and Asn-350. Acetyl-CoA-binding positions include 359–360, Ser-378, Ala-396, and Arg-413; that span reads NY.

In the N-terminal section; belongs to the N-acetylglucosamine-1-phosphate uridyltransferase family. The protein in the C-terminal section; belongs to the transferase hexapeptide repeat family. In terms of assembly, homotrimer. It depends on Mg(2+) as a cofactor.

It localises to the cytoplasm. The catalysed reaction is alpha-D-glucosamine 1-phosphate + acetyl-CoA = N-acetyl-alpha-D-glucosamine 1-phosphate + CoA + H(+). It catalyses the reaction N-acetyl-alpha-D-glucosamine 1-phosphate + UTP + H(+) = UDP-N-acetyl-alpha-D-glucosamine + diphosphate. It participates in nucleotide-sugar biosynthesis; UDP-N-acetyl-alpha-D-glucosamine biosynthesis; N-acetyl-alpha-D-glucosamine 1-phosphate from alpha-D-glucosamine 6-phosphate (route II): step 2/2. It functions in the pathway nucleotide-sugar biosynthesis; UDP-N-acetyl-alpha-D-glucosamine biosynthesis; UDP-N-acetyl-alpha-D-glucosamine from N-acetyl-alpha-D-glucosamine 1-phosphate: step 1/1. The protein operates within bacterial outer membrane biogenesis; LPS lipid A biosynthesis. Its function is as follows. Catalyzes the last two sequential reactions in the de novo biosynthetic pathway for UDP-N-acetylglucosamine (UDP-GlcNAc). The C-terminal domain catalyzes the transfer of acetyl group from acetyl coenzyme A to glucosamine-1-phosphate (GlcN-1-P) to produce N-acetylglucosamine-1-phosphate (GlcNAc-1-P), which is converted into UDP-GlcNAc by the transfer of uridine 5-monophosphate (from uridine 5-triphosphate), a reaction catalyzed by the N-terminal domain. The chain is Bifunctional protein GlmU from Campylobacter jejuni (strain RM1221).